A 181-amino-acid chain; its full sequence is Thymidine kinase (181 aa).

Position 13–20 (13–20) interacts with ATP; that stretch reads GPMFSGKS. The active-site Proton acceptor is the Glu-85. A substrate-binding site is contributed by Phe-115. 2 residues coordinate Zn(2+): Cys-140 and Cys-143. 159-163 provides a ligand contact to substrate; it reads IEIIG. Zn(2+) contacts are provided by Cys-172 and Cys-175.

It belongs to the thymidine kinase family.

It catalyses the reaction thymidine + ATP = dTMP + ADP + H(+). This Yaba monkey tumor virus (strain VR587) (YMTV) protein is Thymidine kinase (TK).